Reading from the N-terminus, the 245-residue chain is Tryptophan synthase alpha chain (245 aa).

Active-site proton acceptor residues include E35 and D46.

The protein belongs to the TrpA family. Tetramer of two alpha and two beta chains.

It catalyses the reaction (1S,2R)-1-C-(indol-3-yl)glycerol 3-phosphate + L-serine = D-glyceraldehyde 3-phosphate + L-tryptophan + H2O. It functions in the pathway amino-acid biosynthesis; L-tryptophan biosynthesis; L-tryptophan from chorismate: step 5/5. The alpha subunit is responsible for the aldol cleavage of indoleglycerol phosphate to indole and glyceraldehyde 3-phosphate. This chain is Tryptophan synthase alpha chain, found in Sulfurisphaera tokodaii (strain DSM 16993 / JCM 10545 / NBRC 100140 / 7) (Sulfolobus tokodaii).